A 415-amino-acid chain; its full sequence is Thyroxine-binding globulin (415 aa).

Positions 1 to 20 (MSPFLYLVLLVLGLHATIHC) are cleaved as a signal peptide. N-linked (GlcNAc...) asparagine glycans are attached at residues asparagine 36, asparagine 99, asparagine 165, and asparagine 253. Thyroxine contacts are provided by asparagine 293 and arginine 398.

This sequence belongs to the serpin family.

It is found in the secreted. Its function is as follows. Major thyroid hormone transport protein in serum. The polypeptide is Thyroxine-binding globulin (SERPINA7) (Pan troglodytes (Chimpanzee)).